Here is a 159-residue protein sequence, read N- to C-terminus: MAIEGLIKQGFVTMSLDRVINWARTGSLWPMTFGLACCAVEMMEAGSSRYDLDRFGIVFRPTPRQSDLMIVAGTLTNKMAPALRKVYDQMPEPKWVISMGSCANGGGYYHYSYAVIRGCDRIVPVDIYVPGCPPTAEALLYGIMQLQDKIRRTNTIART.

Positions 37, 38, 102, and 132 each coordinate [4Fe-4S] cluster.

This sequence belongs to the complex I 20 kDa subunit family. NDH-1 is composed of 14 different subunits. Subunits NuoB, C, D, E, F, and G constitute the peripheral sector of the complex. The cofactor is [4Fe-4S] cluster.

The protein resides in the cell inner membrane. It carries out the reaction a quinone + NADH + 5 H(+)(in) = a quinol + NAD(+) + 4 H(+)(out). In terms of biological role, NDH-1 shuttles electrons from NADH, via FMN and iron-sulfur (Fe-S) centers, to quinones in the respiratory chain. Couples the redox reaction to proton translocation (for every two electrons transferred, four hydrogen ions are translocated across the cytoplasmic membrane), and thus conserves the redox energy in a proton gradient. This is NADH-quinone oxidoreductase subunit B from Vesicomyosocius okutanii subsp. Calyptogena okutanii (strain HA).